The sequence spans 156 residues: SsrA-binding protein (156 aa).

It belongs to the SmpB family.

It localises to the cytoplasm. Functionally, required for rescue of stalled ribosomes mediated by trans-translation. Binds to transfer-messenger RNA (tmRNA), required for stable association of tmRNA with ribosomes. tmRNA and SmpB together mimic tRNA shape, replacing the anticodon stem-loop with SmpB. tmRNA is encoded by the ssrA gene; the 2 termini fold to resemble tRNA(Ala) and it encodes a 'tag peptide', a short internal open reading frame. During trans-translation Ala-aminoacylated tmRNA acts like a tRNA, entering the A-site of stalled ribosomes, displacing the stalled mRNA. The ribosome then switches to translate the ORF on the tmRNA; the nascent peptide is terminated with the 'tag peptide' encoded by the tmRNA and targeted for degradation. The ribosome is freed to recommence translation, which seems to be the essential function of trans-translation. In Clostridium tetani (strain Massachusetts / E88), this protein is SsrA-binding protein.